We begin with the raw amino-acid sequence, 199 residues long: Imidazole glycerol phosphate synthase subunit HisH (199 aa).

Residues 2–199 form the Glutamine amidotransferase type-1 domain; the sequence is RAVIIDYGVG…LTNVYRWLRK (198 aa). The active-site Nucleophile is the Cys-76. Catalysis depends on residues His-178 and Glu-180.

Heterodimer of HisH and HisF.

The protein localises to the cytoplasm. It catalyses the reaction 5-[(5-phospho-1-deoxy-D-ribulos-1-ylimino)methylamino]-1-(5-phospho-beta-D-ribosyl)imidazole-4-carboxamide + L-glutamine = D-erythro-1-(imidazol-4-yl)glycerol 3-phosphate + 5-amino-1-(5-phospho-beta-D-ribosyl)imidazole-4-carboxamide + L-glutamate + H(+). The catalysed reaction is L-glutamine + H2O = L-glutamate + NH4(+). It participates in amino-acid biosynthesis; L-histidine biosynthesis; L-histidine from 5-phospho-alpha-D-ribose 1-diphosphate: step 5/9. In terms of biological role, IGPS catalyzes the conversion of PRFAR and glutamine to IGP, AICAR and glutamate. The HisH subunit catalyzes the hydrolysis of glutamine to glutamate and ammonia as part of the synthesis of IGP and AICAR. The resulting ammonia molecule is channeled to the active site of HisF. In Sulfolobus acidocaldarius (strain ATCC 33909 / DSM 639 / JCM 8929 / NBRC 15157 / NCIMB 11770), this protein is Imidazole glycerol phosphate synthase subunit HisH.